The following is a 385-amino-acid chain: Mannitol-1-phosphate 5-dehydrogenase (385 aa).

An NAD(+)-binding site is contributed by 3-14; that stretch reads ALHFGAGNIGRG.

It belongs to the mannitol dehydrogenase family.

It catalyses the reaction D-mannitol 1-phosphate + NAD(+) = beta-D-fructose 6-phosphate + NADH + H(+). The sequence is that of Mannitol-1-phosphate 5-dehydrogenase from Pasteurella multocida (strain Pm70).